Here is a 506-residue protein sequence, read N- to C-terminus: NAD(P)H-quinone oxidoreductase subunit 2, chloroplastic (506 aa).

13 helical membrane passes run 15 to 35 (LIPE…DLVY), 39 to 59 (CHAW…VLLG), 84 to 104 (LSLV…LLSI), 113 to 133 (APSE…LVAG), 137 to 157 (LLMM…LTGY), 172 to 192 (LLVG…MYGI), 217 to 237 (CALA…AAPF), 249 to 269 (PTPV…ILAV), 283 to 303 (WHLI…FIAV), 339 to 359 (IVYL…VILF), 382 to 402 (ALCL…AGFF), 418 to 438 (SLVW…LSVV), and 471 to 491 (VGIF…NSMV).

Belongs to the complex I subunit 2 family. In terms of assembly, NDH is composed of at least 16 different subunits, 5 of which are encoded in the nucleus.

The protein resides in the plastid. The protein localises to the chloroplast thylakoid membrane. The catalysed reaction is a plastoquinone + NADH + (n+1) H(+)(in) = a plastoquinol + NAD(+) + n H(+)(out). It catalyses the reaction a plastoquinone + NADPH + (n+1) H(+)(in) = a plastoquinol + NADP(+) + n H(+)(out). Functionally, NDH shuttles electrons from NAD(P)H:plastoquinone, via FMN and iron-sulfur (Fe-S) centers, to quinones in the photosynthetic chain and possibly in a chloroplast respiratory chain. The immediate electron acceptor for the enzyme in this species is believed to be plastoquinone. Couples the redox reaction to proton translocation, and thus conserves the redox energy in a proton gradient. This Nephroselmis olivacea (Green alga) protein is NAD(P)H-quinone oxidoreductase subunit 2, chloroplastic.